A 437-amino-acid chain; its full sequence is Probable glycine dehydrogenase (decarboxylating) subunit 1 (437 aa).

Belongs to the GcvP family. N-terminal subunit subfamily. The glycine cleavage system is composed of four proteins: P, T, L and H. In this organism, the P 'protein' is a heterodimer of two subunits.

It carries out the reaction N(6)-[(R)-lipoyl]-L-lysyl-[glycine-cleavage complex H protein] + glycine + H(+) = N(6)-[(R)-S(8)-aminomethyldihydrolipoyl]-L-lysyl-[glycine-cleavage complex H protein] + CO2. In terms of biological role, the glycine cleavage system catalyzes the degradation of glycine. The P protein binds the alpha-amino group of glycine through its pyridoxal phosphate cofactor; CO(2) is released and the remaining methylamine moiety is then transferred to the lipoamide cofactor of the H protein. The polypeptide is Probable glycine dehydrogenase (decarboxylating) subunit 1 (Thermotoga petrophila (strain ATCC BAA-488 / DSM 13995 / JCM 10881 / RKU-1)).